Here is a 511-residue protein sequence, read N- to C-terminus: Ribose import ATP-binding protein RbsA (511 aa).

2 ABC transporter domains span residues 13–249 and 260–503; these read VSMD…VGRA and ALGE…AGIA. ATP is bound at residue 45-52; sequence GENGAGKS.

This sequence belongs to the ABC transporter superfamily. Ribose importer (TC 3.A.1.2.1) family. In terms of assembly, the complex is composed of an ATP-binding protein (RbsA), two transmembrane proteins (RbsC) and a solute-binding protein (RbsB).

Its subcellular location is the cell inner membrane. It carries out the reaction D-ribose(out) + ATP + H2O = D-ribose(in) + ADP + phosphate + H(+). In terms of biological role, part of the ABC transporter complex RbsABC involved in ribose import. Responsible for energy coupling to the transport system. This chain is Ribose import ATP-binding protein RbsA, found in Roseobacter denitrificans (strain ATCC 33942 / OCh 114) (Erythrobacter sp. (strain OCh 114)).